The following is a 359-amino-acid chain: Aromatic amino acid aminotransferase (359 aa).

Lys-223 carries the N6-(pyridoxal phosphate)lysine modification.

The protein belongs to the class-II pyridoxal-phosphate-dependent aminotransferase family. In terms of assembly, homodimer. Requires pyridoxal 5'-phosphate as cofactor.

It catalyses the reaction an aromatic L-alpha-amino acid + 2-oxoglutarate = an aromatic oxo-acid + L-glutamate. Aminotransferase that catalyzes the conversion of aromatic amino acids and 2-oxoglutarate into corresponding aromatic oxo acids and L-glutamate. The sequence is that of Aromatic amino acid aminotransferase from Streptomyces avermitilis (strain ATCC 31267 / DSM 46492 / JCM 5070 / NBRC 14893 / NCIMB 12804 / NRRL 8165 / MA-4680).